Here is a 64-residue protein sequence, read N- to C-terminus: MKTAELRDLDIEALGKKLGESREELFKLRFQHATAQLEKTHRLREVRKDIARIMTVQTEKKRQG.

This sequence belongs to the universal ribosomal protein uL29 family.

This is Large ribosomal subunit protein uL29 from Solidesulfovibrio magneticus (strain ATCC 700980 / DSM 13731 / RS-1) (Desulfovibrio magneticus).